The sequence spans 332 residues: Lipoyl synthase (332 aa).

Residues Cys74, Cys79, Cys85, Cys100, Cys104, Cys107, and Ser314 each coordinate [4Fe-4S] cluster. The region spanning 85–303 (CFGKGTATFM…EQEAYRMGFS (219 aa)) is the Radical SAM core domain.

The protein belongs to the radical SAM superfamily. Lipoyl synthase family. [4Fe-4S] cluster is required as a cofactor.

The protein localises to the cytoplasm. The catalysed reaction is [[Fe-S] cluster scaffold protein carrying a second [4Fe-4S](2+) cluster] + N(6)-octanoyl-L-lysyl-[protein] + 2 oxidized [2Fe-2S]-[ferredoxin] + 2 S-adenosyl-L-methionine + 4 H(+) = [[Fe-S] cluster scaffold protein] + N(6)-[(R)-dihydrolipoyl]-L-lysyl-[protein] + 4 Fe(3+) + 2 hydrogen sulfide + 2 5'-deoxyadenosine + 2 L-methionine + 2 reduced [2Fe-2S]-[ferredoxin]. It functions in the pathway protein modification; protein lipoylation via endogenous pathway; protein N(6)-(lipoyl)lysine from octanoyl-[acyl-carrier-protein]: step 2/2. Catalyzes the radical-mediated insertion of two sulfur atoms into the C-6 and C-8 positions of the octanoyl moiety bound to the lipoyl domains of lipoate-dependent enzymes, thereby converting the octanoylated domains into lipoylated derivatives. The sequence is that of Lipoyl synthase from Verminephrobacter eiseniae (strain EF01-2).